The primary structure comprises 137 residues: Phospholipase A2 group V (137 aa).

Residues 1–20 (MKGLLTLAWFLACSVPAVPG) form the signal peptide. 6 disulfide bridges follow: cysteine 46–cysteine 137, cysteine 48–cysteine 64, cysteine 63–cysteine 117, cysteine 70–cysteine 110, cysteine 79–cysteine 103, and cysteine 97–cysteine 108. Positions 47, 49, and 51 each coordinate Ca(2+). Histidine 67 is a catalytic residue. Aspartate 68 is a binding site for Ca(2+). Aspartate 111 is a catalytic residue.

This sequence belongs to the phospholipase A2 family. The cofactor is Ca(2+). This enzyme lacks one of the seven disulfide bonds found in similar PA2 proteins. In terms of tissue distribution, expressed in peritoneal macrophages (at protein level). Expressed in heart, skeletal muscle and white adipose tissue.

It localises to the secreted. The protein resides in the cell membrane. Its subcellular location is the cytoplasmic vesicle. It is found in the phagosome. The protein localises to the recycling endosome. It localises to the golgi apparatus. The protein resides in the cis-Golgi network. Its subcellular location is the trans-Golgi network. It catalyses the reaction a 1,2-diacyl-sn-glycero-3-phosphocholine + H2O = a 1-acyl-sn-glycero-3-phosphocholine + a fatty acid + H(+). The catalysed reaction is 1-hexadecanoyl-2-(9Z-octadecenoyl)-sn-glycero-3-phosphocholine + H2O = 1-hexadecanoyl-sn-glycero-3-phosphocholine + (9Z)-octadecenoate + H(+). The enzyme catalyses 1-hexadecanoyl-2-(5Z,8Z,11Z,14Z-eicosatetraenoyl)-sn-glycero-3-phosphocholine + H2O = 1-hexadecanoyl-sn-glycero-3-phosphocholine + (5Z,8Z,11Z,14Z)-eicosatetraenoate + H(+). It carries out the reaction 1-hexadecanoyl-2-(9Z,12Z-octadecadienoyl)-sn-glycero-3-phosphoethanolamine + H2O = 1-hexadecanoyl-sn-glycero-3-phosphoethanolamine + (9Z,12Z)-octadecadienoate + H(+). It catalyses the reaction 1-hexadecanoyl-2-(5Z,8Z,11Z,14Z-eicosatetraenoyl)-sn-glycero-3-phosphoethanolamine + H2O = 1-hexadecanoyl-sn-glycero-3-phosphoethanolamine + (5Z,8Z,11Z,14Z)-eicosatetraenoate + H(+). The catalysed reaction is 1-octadecanoyl-2-(5Z,8Z,11Z,14Z-eicosatetraenoyl)-sn-glycero-3-phospho-(1D-myo-inositol) + H2O = 1-octadecanoyl-sn-glycero-3-phospho-(1D-myo-inositol) + (5Z,8Z,11Z,14Z)-eicosatetraenoate + H(+). The enzyme catalyses 1-hexadecanoyl-2-(9Z-octadecenoyl)-sn-glycero-3-phosphoglycerol + H2O = 1-hexadecanoyl-sn-glycero-3-phosphoglycerol + (9Z)-octadecenoate + H(+). It carries out the reaction N-hexadecanoyl-1,2-di-(9Z-octadecenoyl)-sn-glycero-3-phosphoethanolamine + H2O = N-hexadecanoyl-1-(9Z-octadecenoyl)-sn-glycero-3-phosphoethanolamine + (9Z)-octadecenoate + H(+). It catalyses the reaction 1'-[1,2-di-(9Z-octadecenoyl)-sn-glycero-3-phospho]-3'-[1-(9Z-octadecenoyl)-sn-glycero-3-phospho]-glycerol + H2O = 1',3'-bis-[1-(9Z-octadecenoyl)-sn-glycero-3-phospho]-glycerol + (9Z)-octadecenoate + H(+). The catalysed reaction is 1',3'-bis[1,2-di-(9Z-octadecenoyl)-sn-glycero-3-phospho]-glycerol + H2O = 1'-[1,2-di-(9Z-octadecenoyl)-sn-glycero-3-phospho]-3'-[1-(9Z-octadecenoyl)-sn-glycero-3-phospho]-glycerol + (9Z)-octadecenoate + H(+). It participates in lipid metabolism; phospholipid metabolism. The protein operates within lipid metabolism; leukotriene B4 biosynthesis. It functions in the pathway lipid metabolism; leukotriene C4 biosynthesis. Secretory calcium-dependent phospholipase A2 that primarily targets extracellular phospholipids. Hydrolyzes the ester bond of the fatty acyl group attached at sn-2 position of phospholipids (phospholipase A2 activity), preferentially releasing fatty acyl groups with a low degree of unsaturation such as oleoyl (C18:1) and linoleoyl (C18:2) groups. Hydrolyzes low-density lipoprotein (LDL) phospholipids releasing unsaturated fatty acids that drive macrophage polarization toward an M2 phenotype. May act in an autocrine and paracrine manner. Contributes to lipid remodeling of cellular membranes at different subcellular locations and generation of lipid mediators involved in pathogen clearance. Cleaves sn-2 fatty acyl chains of cardiolipin, a major component of the inner membrane of mitochondria and bacterial membranes. Promotes phagocytosis of bacteria in macrophages through production of lysophosphatidylethanolamines. Displays bactericidal activity against Gram-positive bacteria by directly hydrolyzing the phospholipids of the bacterial membrane. Promotes phagocytosis and killing of ingested fungi likely through controlling phagosome-lysosome fusion and phagosome maturation. Plays a role in biosynthesis of cysteinyl leukotrienes (CysLTs) in myeloid cells. In eosinophils, triggers perinuclear arachidonate release and LTC4 synthesis in a PLA2G4A-independent way. In neutrophils, amplifies CysLTs biosynthesis initiated by PLA2G4A. Promotes immune complex clearance in macrophages via stimulating synthesis of CysLTs, which act through CYSLTR1 to trigger phagocytosis. May regulate antigen processing in antigen-presenting cells. In pulmonary macrophages regulates IL33 production required for activation of group 2 innate lymphoid cells. May play a role in the biosynthesis of N-acyl ethanolamines that regulate energy metabolism. Hydrolyzes N-acyl phosphatidylethanolamines to N-acyl lysophosphatidylethanolamines, which are further cleaved by a lysophospholipase D to release N-acyl ethanolamines. The chain is Phospholipase A2 group V (Pla2g5) from Mus musculus (Mouse).